The following is a 120-amino-acid chain: Large ribosomal subunit protein bL19 (120 aa).

It belongs to the bacterial ribosomal protein bL19 family.

Functionally, this protein is located at the 30S-50S ribosomal subunit interface and may play a role in the structure and function of the aminoacyl-tRNA binding site. The chain is Large ribosomal subunit protein bL19 from Chlorobium luteolum (strain DSM 273 / BCRC 81028 / 2530) (Pelodictyon luteolum).